The primary structure comprises 97 residues: Serine protease inhibitor Kazal-type 13 (97 aa).

Positions 1–26 (MKRSGCWHQRMLLSLVLLTWTHVTFS) are cleaved as a signal peptide. A glycan (N-linked (GlcNAc...) asparagine) is linked at N33. The region spanning 36–97 (RWPKPPCKMY…IQFVKYGKCE (62 aa)) is the Kazal-like domain. 3 disulfides stabilise this stretch: C42-C78, C56-C75, and C64-C96.

It is found in the secreted. In terms of biological role, may be a serine protease inhibitor. Essential for sperm maturation and fertility. Inhibits sperm acrosome reaction, protecting sperm from premature reaction. This is Serine protease inhibitor Kazal-type 13 (Spink13) from Mus musculus (Mouse).